The chain runs to 23 residues: Aurein-4.1 (23 aa).

The protein belongs to the frog skin active peptide (FSAP) family. Aurein subfamily. As to expression, expressed by the skin dorsal glands.

Its subcellular location is the secreted. Has no antimicrobial or anticancer activity. This chain is Aurein-4.1, found in Ranoidea aurea (Green and golden bell frog).